The primary structure comprises 397 residues: Elongation factor Tu (397 aa).

In terms of domain architecture, tr-type G spans 10–207 (LPHVNVGTIG…TLDSYIPEPV (198 aa)). Residues 19–26 (GHVDHGKT) are G1. Residue 19–26 (GHVDHGKT) coordinates GTP. Threonine 26 contributes to the Mg(2+) binding site. The tract at residues 60–64 (GITIN) is G2. The interval 81-84 (DCPG) is G3. GTP contacts are provided by residues 81–85 (DCPGH) and 136–139 (NKAD). The tract at residues 136–139 (NKAD) is G4. The G5 stretch occupies residues 174 to 176 (SAR).

The protein belongs to the TRAFAC class translation factor GTPase superfamily. Classic translation factor GTPase family. EF-Tu/EF-1A subfamily. As to quaternary structure, monomer.

The protein localises to the cytoplasm. It catalyses the reaction GTP + H2O = GDP + phosphate + H(+). GTP hydrolase that promotes the GTP-dependent binding of aminoacyl-tRNA to the A-site of ribosomes during protein biosynthesis. The chain is Elongation factor Tu from Pseudomonas syringae pv. syringae (strain B728a).